Reading from the N-terminus, the 277-residue chain is Probable cyclic nucleotide phosphodiesterase MCR_0369 (277 aa).

Positions 17, 19, 53, 83, 165, 204, and 206 each coordinate Fe cation. Residues histidine 19, aspartate 53, and asparagine 83–histidine 84 each bind AMP. Histidine 206 lines the AMP pocket.

This sequence belongs to the cyclic nucleotide phosphodiesterase class-III family. Fe(2+) is required as a cofactor.

The polypeptide is Probable cyclic nucleotide phosphodiesterase MCR_0369 (Moraxella catarrhalis (strain BBH18)).